Reading from the N-terminus, the 1125-residue chain is tRNA (34-2'-O)-methyltransferase regulator WDR6 (1125 aa).

Position 1 is an N-acetylmethionine (Met1). 19 WD repeats span residues 53-97, 105-143, 147-189, 200-238, 247-285, 289-327, 335-376, 381-422, 425-470, 476-520, 559-598, 604-642, 645-684, 739-785, 848-897, 905-950, 974-1016, 1040-1077, and 1083-1125; these read VKRV…VVKV, RELW…LYDP, CMLQ…IWYP, APDR…LWKV, RVQN…VWSH, ILQA…LWHL, LGVS…LYDL, WEQL…VVPI, PTAA…ISAA, IFVK…LFPV, PVST…FVHG, VLRQ…VWSP, HEKL…LYRA, LIDI…VWAV, RNKH…LFLL, HLLA…FWDL, GTPS…VFTL, EEYS…FWRL, and TFMN…NWYD.

This sequence belongs to the WD repeat WDR6 family. As to quaternary structure, interacts with FTSJ1; the interaction is direct, and required for 2'-O-methylation of position 34 in substrate tRNAs. Interacts with IRS4. Interacts with STK11/LKB1.

Its subcellular location is the cytoplasm. Together with methyltransferase FTSJ1, methylates the 2'-O-ribose of nucleotides at position 34 of the tRNA anticodon loop of substrate tRNAs. Required for the correct positioning of the substrate tRNA for methylation. Required to suppress amino acid starvation-induced autophagy. Enhances the STK11/LKB1-induced cell growth suppression activity. This Mus musculus (Mouse) protein is tRNA (34-2'-O)-methyltransferase regulator WDR6 (Wdr6).